The following is a 372-amino-acid chain: Probable O-methyltransferase 2 (372 aa).

3 residues coordinate S-adenosyl-L-methionine: Gly-216, Asp-259, and Lys-273. His-277 serves as the catalytic Proton acceptor.

Belongs to the class I-like SAM-binding methyltransferase superfamily. Cation-independent O-methyltransferase family. COMT subfamily. In terms of assembly, homodimer. In terms of tissue distribution, expressed predominantly in root hairs.

Its function is as follows. O-methyltransferase of unknown substrate specificity. Not active on resorcinol, orcinol, guaiacol, eugenol, ferulic acid, p-coumaric acid, catechol, caffeic acid or monomethyl ethers of resorcinol or orcinol. The chain is Probable O-methyltransferase 2 (OMT2) from Sorghum bicolor (Sorghum).